Reading from the N-terminus, the 1383-residue chain is MSLKVIPCTLTKNQEVFKCVSAQLQYRRGEEEHGSGPIIHRWRPNGHTVAVACANNTVIYYDKKGNVIDALNPTGKLIDIAWDKEGDVLAIAVANTGTIYLWDVNSRNTDTVESGATSSKELPTCLAWSPSTPTLVIGNNAGNIVVYNHRTSRRIAVMGKHQRSVTQITVTPEDYVISCSDDNTLSVTTLEGTTVSTTTTNGEPTNMDYGSVNGKGGSGVTMVSVVIGKKILMLAHYNALDEPVNLQFQEKYGNIHSYRWFNDGYILIGFDRGYIISISAHNNEIGSELVSFLEYRGYLASIAVSTSFNKLLTIGDNMVKVRDLDELTTVTMLTEIETEKNLSEIEVTEDGQLVAVSSQSGVLSIFVTKMPTLAASYNNSICYLTNLTQVTVVAEVEKKGSSTLELNIEPTVMGLGPLNLAVANNNTVFFYDYHTPAQMQAAQQLQSTQSAAEKPTIVAAEPINRVEYLSTVTNIQLNYMYAAVNFGSRLRLHRIRNSEDNVSIEFPEANRNATLYSYALTENFLIFTTSNNYIVYFSLSEWAIVSEYRHVVPVRSIFPHPTNVVCCCFDDRLEAMIYSAVDDEVFRLPSVGSSAHYKGAIWETFTIDKNTFAVFDSQNIYVFLLSKQHIQGESVIYVSATRLPHAYVPLSLNKGIVTCLMSNGKLSSVLLDSHKTESVISDKSETVIDDILTRSLLMHRWSTAWKICIHSNDGSHWNQFAMAALLDSDVGMAIKIFREIGDAAMVTALELIETIEEKNLLHAQIYTILSRYDDAEQLYLESSRPMEALNMRRDLLEWPKALVLAETMNPKEIPYLSKEYAQELELTGDHANSLANYEKGVMENPQNLPELQEHNEICQSGIARMAIKTGDLRRGVQLAKQLEGRVVKRDCAIILEQMKQYTEAAQLYEVGLFYDRAAAVCLKANAWAKVGELLDHVKSPKIHIQYGKIMEKEKKYKVAVKCYETGRDYDNQVRLLLDPLNDPDEAVRVVRESRSIEGAKLVAKFFVKLGDYNSAIQFLVMSQCVQEAFELAEKNNAVREYAKAIEQHGNISQALELAEYYNRVNDMFMAAKFYTQAGQYNNAINLLFKNGDDENCVALAVDCGIKSKDKTLNNKLVKFLLGEDGNVKDPAQLFRLYVGLGRTKDAAQTAVVVAQIHQAKGNYRIARDLLFQMHQQLREKMMRIPLDMNKSLMAIHSYIIVKALINRKETLLAARLLIRTCGEIQRFPTHVVPILTSSVVICTQANLKKSAHKFAAQLMTPEYRPKIHEKYKKKIEDIVRKGGNQKDLVEENTPCPICDDLMPAYAMSCDNCKSLVPYCILTGRHIVASDFSRCPHCEMPGFYSEFRKLSILNENCYMCGGDLKGAIPEDAKAYLEKMEQDYK.

5 WD repeats span residues 32–71 (EHGS…IDAL), 72–112 (NPTG…TDTV), 118–157 (SSKE…RIAV), 160–198 (KHQR…VSTT), and 337–376 (ETEK…LAAS). 7 TPR repeats span residues 756-789 (EEKN…MEAL), 810-847 (PKEI…NPQN), 885-918 (RVVK…DRAA), 940-973 (PKIH…DNQV), 996-1029 (IEGA…QEAF), 1031-1053 (LAEK…NISQ), and 1064-1097 (VNDM…ENCV).

In terms of assembly, component of the IFT complex A (IFT-A) composed of at least che-11, daf-10, dyf-2, ift-139, ift-43 and ifta-1. Expressed in ciliated sensory neurons.

The protein localises to the cell projection. Its subcellular location is the cilium. Component of the IFT complex A (IFT-A), a complex required for retrograde ciliary transport. Moves along the ciliary axoneme and is involved in the assembly, localization and the movement of other intraflagellar transport (IFT) proteins along the cilia axoneme. May also associate with the BBSome complex in order to mediate ciliary transport. Regulates cilia biogenesis, morphology and sensitivity to environmental cues. The sequence is that of WD repeat-containing protein dyf-2 from Caenorhabditis elegans.